The following is a 1107-amino-acid chain: Membrane-associated guanylate kinase, WW and PDZ domain-containing protein 3 (1107 aa).

One can recognise a PDZ 1 domain in the interval 17-102; that stretch reads ECGLSGVGGD…PIRLKTVKPG (86 aa). Residues 110-284 form the Guanylate kinase-like domain; sequence RHYLSLQFQK…SMDFRNYLTR (175 aa). Residue 117–124 coordinates ATP; that stretch reads FQKGSIDH. The segment at 210–277 is disordered; the sequence is FDTETQRKRT…SYNQTNSSMD (68 aa). Residues 220-231 show a composition bias toward polar residues; that stretch reads TSVSKMQRTDSS. Residues 232-241 are compositionally biased toward acidic residues; the sequence is LPEEEDEEER. Residues 251-261 are compositionally biased toward basic and acidic residues; it reads TDHRDRQEPSE. Residues 267–277 show a composition bias toward polar residues; sequence PSYNQTNSSMD. WW domains are found at residues 289 to 322 and 335 to 368; these read EPLPKNWEMAYTEAGMIYFIDHNTKTTTWLDPRL and GELPYGWEKIEDPQYGTYYVDHINQKTQFDNPVL. The disordered stretch occupies residues 374–398; it reads KQLNPAPSEGTVHQEPENSQFTRDP. PDZ domains lie at 407-489, 577-653, 727-809, and 853-940; these read HTSL…TLCR, TIPL…LILR, DVFL…TVRR, and DVIL…IAEE. A disordered region spans residues 941–975; sequence EHRGPPSGSNSARQSPAPQHRPMGQTQPTYGTLDR. The span at 947–957 shows a compositional bias: polar residues; the sequence is SGSNSARQSPA. The region spanning 1003–1085 is the PDZ 6 domain; that stretch reads PVELERGPRG…KVLLLLRPGT (83 aa).

This sequence belongs to the MAGUK family.

It localises to the cell membrane. The protein resides in the cell junction. Its subcellular location is the tight junction. In terms of biological role, acts as a scaffolding protein at cell-cell junctions, thereby regulating various cellular and signaling processes. The polypeptide is Membrane-associated guanylate kinase, WW and PDZ domain-containing protein 3 (magi3) (Xenopus tropicalis (Western clawed frog)).